The primary structure comprises 128 residues: Aspartate 1-decarboxylase (128 aa).

S25 serves as the catalytic Schiff-base intermediate with substrate; via pyruvic acid. At S25 the chain carries Pyruvic acid (Ser). T57 is a binding site for substrate. Residue Y58 is the Proton donor of the active site. 73–75 contacts substrate; the sequence is GSA.

Belongs to the PanD family. As to quaternary structure, heterooctamer of four alpha and four beta subunits. The cofactor is pyruvate. In terms of processing, is synthesized initially as an inactive proenzyme, which is activated by self-cleavage at a specific serine bond to produce a beta-subunit with a hydroxyl group at its C-terminus and an alpha-subunit with a pyruvoyl group at its N-terminus.

Its subcellular location is the cytoplasm. The catalysed reaction is L-aspartate + H(+) = beta-alanine + CO2. It functions in the pathway cofactor biosynthesis; (R)-pantothenate biosynthesis; beta-alanine from L-aspartate: step 1/1. Functionally, catalyzes the pyruvoyl-dependent decarboxylation of aspartate to produce beta-alanine. This is Aspartate 1-decarboxylase from Paraburkholderia phytofirmans (strain DSM 17436 / LMG 22146 / PsJN) (Burkholderia phytofirmans).